The sequence spans 315 residues: Acetyl-coenzyme A carboxylase carboxyl transferase subunit alpha (315 aa).

The region spanning K35–I289 is the CoA carboxyltransferase C-terminal domain.

Belongs to the AccA family. Acetyl-CoA carboxylase is a heterohexamer composed of biotin carboxyl carrier protein (AccB), biotin carboxylase (AccC) and two subunits each of ACCase subunit alpha (AccA) and ACCase subunit beta (AccD).

The protein resides in the cytoplasm. The enzyme catalyses N(6)-carboxybiotinyl-L-lysyl-[protein] + acetyl-CoA = N(6)-biotinyl-L-lysyl-[protein] + malonyl-CoA. Its pathway is lipid metabolism; malonyl-CoA biosynthesis; malonyl-CoA from acetyl-CoA: step 1/1. Its function is as follows. Component of the acetyl coenzyme A carboxylase (ACC) complex. First, biotin carboxylase catalyzes the carboxylation of biotin on its carrier protein (BCCP) and then the CO(2) group is transferred by the carboxyltransferase to acetyl-CoA to form malonyl-CoA. This chain is Acetyl-coenzyme A carboxylase carboxyl transferase subunit alpha, found in Francisella tularensis subsp. mediasiatica (strain FSC147).